The following is a 491-amino-acid chain: Blue-light-activated histidine kinase (491 aa).

The PAS 1 domain maps to 19–92 (EANPFTAAVE…EIIHSALEAE (74 aa)). Cys69 is subject to S-4a-FMN cysteine. In terms of domain architecture, PAC spans 93–147 (QSVEIDILNYKKSGEPFWNRLHISPVKTENGELHHFVSSQLDVTLELGKLVELEK). A PAS 2 domain is found at 159–230 (SSDQLQYIVE…QRSQESFATG (72 aa)). The segment at 286–368 (EISHRFKNSM…GHRIRTSGPE (83 aa)) is HWE histidine kinase domain. His289 is subject to Phosphohistidine; by autocatalysis.

In terms of processing, FMN binds covalently to cysteine after exposure to blue light and this bond is spontaneously broken in the dark.

It carries out the reaction ATP + protein L-histidine = ADP + protein N-phospho-L-histidine.. Functionally, photosensitive kinase that is involved in increased bacterial virulence upon exposure to light. The chain is Blue-light-activated histidine kinase from Brucella anthropi (strain ATCC 49188 / DSM 6882 / CCUG 24695 / JCM 21032 / LMG 3331 / NBRC 15819 / NCTC 12168 / Alc 37) (Ochrobactrum anthropi).